A 1585-amino-acid polypeptide reads, in one-letter code: MGKKRKPSPERSSDEDEVSTPSPKDRTARPTAAARRENVALSQAVALSLEDASNFCSLAFSLERIKREPVDTDYDDPNQPGPSSVPVSARTDHVLPIRFKIKAEPQEYDSDEYGKDHGAVQIANKEVPAISPIEEVSQKRRGRPRKTDAAQHLFFPHVSIKQEPDDGFINFHESRCVGIAQDPEMQHLHDVNESHSSEIAIFRETKKITERKKKKTEAEKLWDNMSLTEKEVFQSHTRRRRTTRLPIIQNFEETEEGCIVEVPIPLIDLDNDAVESVTGPQHENVTVSENVLSTESTDQEVTETKRLHDSSRDFNPPRIQDTPSTVIRPEGDQKDPMSSTSSKRRNTNNSRCASLLSNPHSTPVTRLMRGILDSENSDNDEMLSNDQSEIAKRPRTPRPRYSPEAQRRTNSRLSALTIDTNRSNDLNVDGSAPSSSSAASCGLSTPDPDRTSQQRRKGNQSAARSRKIKTPSPPLSQEDEPMELDSDDDPVNELDNLPIVIDDPSYVLTKEHKEIFEQVKKSVSDRNEFSPAQISEIYRSSKGEQARLPERIHFGAFIMKTWYGSPFPAEFINVKKLFICEFCFFYARSDEIMQNHAKKCMLRAPPGLEIYRKGDISVFEVDGRLQKEYCQTLCLVSRMFLESKTVFYDTEPFFFYIVTINDDIGCHFAGYFSKEKYEPDVNNLSCIMTLPCYQEMGLGRFLIDISYALSRKEKWFGGPEQPLSELGRKAYGGYWRTTIASCLGRLKDELEFGSGISIKMIADDTGVNCHDILEVVCSLGWAKPVDPDEKNHYKLEWDVDWDMVSIILRESEASKETKVQYDPECLDWVPRKMRPSMDGYHELSKEEIEQDEQRRKSIQKTPVHVSMEKATPTSTTSLPVGSVKKELRSRGHNRSVGRNLKHEVNRKVKVPEWAAARDLTDEEITVEENKKQQKQNRKIFTRCADSVLDKSNIREETPEDDEPGPSTKPSGKRQRGNKCNNTESEPNPSGRKTSATSSGRGKYRNRRTDGTEEEEEDDDPTDSEPLTTDDEKPFETSVNKEKNEKSRRGKKVSKKRRSVAGKKFPPNFGVRDRDEPKKAENSEDGEGLESKPGPSTEMILVEKVEEEEAKVTVSDINMQASESKIEGIEQTSEVDIPKSDEDHQSTEAYDRVEDEVPITDYNIPTPDSYHSSPPHSPTPSPQPQLMQAQQNIYQDNDCHFAENDSKPPHLVSEVDDPAAPQPTVTLQSGPSDAPPLSHNSVDGYSTGDDDAPPNLSPQIGKSENNEEEMPLIAPIVQHNGITHHEESTAQHYHDSMNAGPSTSSHVTPQMSMINTTPQQPPFSHPNSQQQATPGSGGVPSCGPAYTHHTPEQQSQQFMSPPMAGMPASVASNHSIHNSNSIEMVGGPASLQHTPQQYEMGHSMAQMSQESAIGGINTVPSIEQQNQLMLQHHQFSSPPAAPPPSQQQQVVQPPIPPAPTTANGRRRSESAATQRTKARQQHQHQQQQPQQPQQRIAAPGVPQGVHPQMQFPMNAMNMMPAYPPFYPYTNYPNIWQPPYQNYPYNQVDYQQPWLYNNGHIPHQTNGTATNQFHPGHMGYFPNNNGR.

2 disordered regions span residues 1–37 and 279–491; these read MGKK…ARRE and GPQH…DDPV. The segment covering 23–37 has biased composition (basic and acidic residues); sequence PKDRTARPTAAARRE. Positions 279–296 are enriched in polar residues; that stretch reads GPQHENVTVSENVLSTES. Over residues 302–312 the composition is skewed to basic and acidic residues; that stretch reads TETKRLHDSSR. Polar residues-rich tracts occupy residues 355–364 and 411–426; these read LLSNPHSTPV and SRLS…SNDL. Low complexity predominate over residues 431-440; sequence SAPSSSSAAS. Residues 453–469 are compositionally biased toward basic residues; the sequence is QQRRKGNQSAARSRKIK. Over residues 477–491 the composition is skewed to acidic residues; sequence QEDEPMELDSDDDPV. The region spanning 544–830 is the MYST-type HAT domain; it reads EQARLPERIH…YDPECLDWVP (287 aa). The segment at 577–602 adopts a C2HC MYST-type zinc-finger fold; it reads LFICEFCFFYARSDEIMQNHAKKCML. An N6-acetyllysine; by autocatalysis modification is found at Lys-644. An acetyl-CoA-binding site is contributed by 685–689; it reads SCIMT. Glu-720 (proton donor/acceptor) is an active-site residue. 2 residues coordinate acetyl-CoA: Ser-724 and Lys-815. Basic and acidic residues-rich tracts occupy residues 844 to 855 and 947 to 956; these read SKEEIEQDEQRR and VLDKSNIREE. Disordered stretches follow at residues 844–903, 927–1262, 1286–1373, and 1431–1507; these read SKEE…LKHE, EENK…IGKS, ESTA…ASNH, and HHQF…VHPQ. Polar residues predominate over residues 977 to 999; sequence NKCNNTESEPNPSGRKTSATSSG. The span at 1011–1022 shows a compositional bias: acidic residues; the sequence is TEEEEEDDDPTD. The segment covering 1029–1046 has biased composition (basic and acidic residues); it reads DDEKPFETSVNKEKNEKS. The segment covering 1047–1060 has biased composition (basic residues); that stretch reads RRGKKVSKKRRSVA. 2 stretches are compositionally biased toward basic and acidic residues: residues 1070 to 1081 and 1135 to 1151; these read VRDRDEPKKAEN and DIPK…AYDR. Over residues 1164 to 1173 the composition is skewed to low complexity; it reads PTPDSYHSSP. Residues 1185–1194 show a composition bias toward polar residues; the sequence is LMQAQQNIYQ. Residues 1196-1207 are compositionally biased toward basic and acidic residues; the sequence is NDCHFAENDSKP. Polar residues-rich tracts occupy residues 1298–1317 and 1324–1333; these read AGPS…NTTP and HPNSQQQATP. Over residues 1482–1493 the composition is skewed to low complexity; it reads QHQQQQPQQPQQ.

Belongs to the MYST (SAS/MOZ) family.

It catalyses the reaction L-lysyl-[protein] + acetyl-CoA = N(6)-acetyl-L-lysyl-[protein] + CoA + H(+). In terms of biological role, probable histone acetyltransferase. Required to initiate and then maintain lateralized gene expression in the ASE sensory neurons. Involved in determining cell fate in the ASE neurons. The polypeptide is Histone acetyltransferase lsy-12 (Caenorhabditis elegans).